The following is a 186-amino-acid chain: MTHRCLLQMVLLLCFSTTALSRSYSLLRFQQRRSLALCQKLLRQLPSTPQHCLEARMDFQMPEEMKQAQQFQKEDAILVIYEMLQQIFNILTRDFSSTGWSETIIEDLLEELYEQMNHLEPIQKEIMQKQNSTMGDTTVLHLRKYYFNLVQYLKSKEYNRCAWTVVRVQILRNFSFLTRLTGYLRE.

The signal sequence occupies residues 1 to 21 (MTHRCLLQMVLLLCFSTTALS). Cys-52 and Cys-161 are joined by a disulfide. 2 N-linked (GlcNAc...) asparagine glycosylation sites follow: Asn-131 and Asn-173.

This sequence belongs to the alpha/beta interferon family. In terms of assembly, monomer.

Its subcellular location is the secreted. Its function is as follows. Has antiviral, antibacterial and anticancer activities. The sequence is that of Interferon beta-2 (IFNB2) from Bos taurus (Bovine).